The sequence spans 547 residues: Chorismate synthase (547 aa).

Catalysis depends on residues His-17, His-104, and Asp-500.

Belongs to the chorismate synthase family.

It localises to the cytoplasm. Its subcellular location is the cytosol. The enzyme catalyses 5-O-(1-carboxyvinyl)-3-phosphoshikimate = chorismate + phosphate. It catalyses the reaction FMNH2 + NADP(+) = FMN + NADPH + 2 H(+). The protein operates within metabolic intermediate biosynthesis; chorismate biosynthesis; chorismate from D-erythrose 4-phosphate and phosphoenolpyruvate: step 7/7. Bifunctional chorismate synthase and flavin reductase. Catalyzes the conversion of 5-enolpyruvylshikimate 3-phosphate (EPSP) to form chorismate. Acts also as a flavin reductase (FR) able to generate reduced flavin mononucleotide in the presence of NADPH. This chain is Chorismate synthase, found in Plasmodium vivax (strain Salvador I).